An 892-amino-acid chain; its full sequence is UPF0182 protein Gura_0902 (892 aa).

A run of 7 helical transmembrane segments spans residues 6 to 26, 50 to 70, 103 to 123, 158 to 178, 201 to 221, 248 to 268, and 271 to 291; these read FIII…LINF, VGAG…NLHF, LGIL…AMQW, MLKI…GAVY, LAVL…LNGC, ILTV…WQGA, and LALL…KAYP.

This sequence belongs to the UPF0182 family.

The protein localises to the cell membrane. The sequence is that of UPF0182 protein Gura_0902 from Geotalea uraniireducens (strain Rf4) (Geobacter uraniireducens).